The primary structure comprises 467 residues: Immunoglobulin superfamily member 21 (467 aa).

An N-terminal signal peptide occupies residues 1-24 (MRTAPSLRRCVCLLLAAILDLARG). Residues 25-132 (YLTVNIEPLP…RATREKVVLA (108 aa)) form the Ig-like 1 domain. C46 and C116 form a disulfide bridge. N-linked (GlcNAc...) asparagine glycosylation is found at N82 and N165. Residues 229-259 (LSLLDAENRGGRPYTERPSRGLTPDPNILLQ) are disordered. Basic and acidic residues predominate over residues 234-247 (AENRGGRPYTERPS). Positions 344–429 (PKIVMTPSRA…GSTDTHTRLI (86 aa)) constitute an Ig-like 2 domain. N407 and N444 each carry an N-linked (GlcNAc...) asparagine glycan.

As to quaternary structure, interacts (Ig-like 1 domain) with NRXN2 (via Laminin G-like 1 domain) in a trans-interaction manner.

Its subcellular location is the postsynaptic cell membrane. Its function is as follows. Involved in synaptic inhibition in the brain. Selectively regulates inhibitory presynaptic differentiation through interacting with presynaptic NRXN2. This Homo sapiens (Human) protein is Immunoglobulin superfamily member 21.